The following is a 189-amino-acid chain: Interferon alpha-5 (189 aa).

A signal peptide spans 1–23 (MARLCAFLMVLPVLSYWPTCSLG). Disulfide bonds link cysteine 24–cysteine 122 and cysteine 52–cysteine 162. Residue asparagine 101 is glycosylated (N-linked (GlcNAc...) asparagine).

This sequence belongs to the alpha/beta interferon family.

It is found in the secreted. Produced by macrophages, IFN-alpha have antiviral activities. Interferon stimulates the production of two enzymes: a protein kinase and an oligoadenylate synthetase. The protein is Interferon alpha-5 (Ifna5) of Mus musculus (Mouse).